A 99-amino-acid polypeptide reads, in one-letter code: MFAIIKTGGKQIKVEAGMEIFIEKLEGELNTEVTFEEVLMVDGKFGSPLVQGAKVTGTIVKQGKGKKIRVVRYHPKKNVNKVYGHRQPYTKVKIEKIEA.

This sequence belongs to the bacterial ribosomal protein bL21 family. In terms of assembly, part of the 50S ribosomal subunit. Contacts protein L20.

In terms of biological role, this protein binds to 23S rRNA in the presence of protein L20. In Mesoplasma florum (strain ATCC 33453 / NBRC 100688 / NCTC 11704 / L1) (Acholeplasma florum), this protein is Large ribosomal subunit protein bL21.